A 747-amino-acid chain; its full sequence is RNA polymerase II assembly factor rtp1 (747 aa).

HEAT repeat units lie at residues 37–75 (NYFL…LLGV), 103–141 (QIYN…NCHE), 320–358 (DIIR…VCGT), 381–418 (SQLA…NVDS), 459–485 (EENE…LDLE), 486–523 (NPIS…SKDD), and 557–594 (INPV…KYDD).

Belongs to the Tango6 family. As to quaternary structure, interacts with RNA polymerase II subunits. Interacts with nuclear pore complex subunits.

Its subcellular location is the cytoplasm. It localises to the nucleus. Its function is as follows. Required for the cytoplasmic assembly and the nuclear import of RNA polymerase II. This is RNA polymerase II assembly factor rtp1 from Schizosaccharomyces pombe (strain 972 / ATCC 24843) (Fission yeast).